The chain runs to 148 residues: Succinate dehydrogenase assembly factor 3, mitochondrial (148 aa).

Residues 1-12 (MYALRPTLRRSA) constitute a mitochondrion transit peptide. The interval 129–148 (RGTEGDLEDGDGGESGQKSQ) is disordered.

The protein belongs to the complex I LYR family. SDHAF3 subfamily. In terms of assembly, interacts with the iron-sulfur protein subunit within the SDH catalytic dimer.

The protein resides in the mitochondrion matrix. Its function is as follows. Plays an essential role in the assembly of succinate dehydrogenase (SDH), an enzyme complex (also referred to as respiratory complex II) that is a component of both the tricarboxylic acid (TCA) cycle and the mitochondrial electron transport chain, and which couples the oxidation of succinate to fumarate with the reduction of ubiquinone (coenzyme Q) to ubiquinol. Promotes maturation of the iron-sulfur protein subunit of the SDH catalytic dimer, protecting it from the deleterious effects of oxidants. May act together with SDHAF1. In Neurospora crassa (strain ATCC 24698 / 74-OR23-1A / CBS 708.71 / DSM 1257 / FGSC 987), this protein is Succinate dehydrogenase assembly factor 3, mitochondrial.